Reading from the N-terminus, the 167-residue chain is Small ribosomal subunit protein uS5 (167 aa).

In terms of domain architecture, S5 DRBM spans 12 to 75 (LQEKLIAVNR…EKARRNMVTV (64 aa)).

This sequence belongs to the universal ribosomal protein uS5 family. In terms of assembly, part of the 30S ribosomal subunit. Contacts proteins S4 and S8.

With S4 and S12 plays an important role in translational accuracy. Its function is as follows. Located at the back of the 30S subunit body where it stabilizes the conformation of the head with respect to the body. The polypeptide is Small ribosomal subunit protein uS5 (Shewanella oneidensis (strain ATCC 700550 / JCM 31522 / CIP 106686 / LMG 19005 / NCIMB 14063 / MR-1)).